The chain runs to 493 residues: Glutamyl-tRNA(Gln) amidotransferase subunit A (493 aa).

Active-site charge relay system residues include Lys79 and Ser159. The Acyl-ester intermediate role is filled by Ser183.

It belongs to the amidase family. GatA subfamily. In terms of assembly, heterotrimer of A, B and C subunits.

It catalyses the reaction L-glutamyl-tRNA(Gln) + L-glutamine + ATP + H2O = L-glutaminyl-tRNA(Gln) + L-glutamate + ADP + phosphate + H(+). In terms of biological role, allows the formation of correctly charged Gln-tRNA(Gln) through the transamidation of misacylated Glu-tRNA(Gln) in organisms which lack glutaminyl-tRNA synthetase. The reaction takes place in the presence of glutamine and ATP through an activated gamma-phospho-Glu-tRNA(Gln). The protein is Glutamyl-tRNA(Gln) amidotransferase subunit A of Rhizobium leguminosarum bv. trifolii (strain WSM2304).